The primary structure comprises 87 residues: Small ribosomal subunit protein bS20 (87 aa).

Basic residues predominate over residues 1 to 11 (MAHHKSAIKRI). Residues 1 to 26 (MAHHKSAIKRIKQNEKRNARNRHQKS) are disordered.

It belongs to the bacterial ribosomal protein bS20 family.

Binds directly to 16S ribosomal RNA. The sequence is that of Small ribosomal subunit protein bS20 from Trichlorobacter lovleyi (strain ATCC BAA-1151 / DSM 17278 / SZ) (Geobacter lovleyi).